A 275-amino-acid polypeptide reads, in one-letter code: Ribosomal RNA small subunit methyltransferase A (275 aa).

Asparagine 21, leucine 23, glycine 48, glutamate 69, aspartate 94, and asparagine 115 together coordinate S-adenosyl-L-methionine.

It belongs to the class I-like SAM-binding methyltransferase superfamily. rRNA adenine N(6)-methyltransferase family. RsmA subfamily.

It is found in the cytoplasm. The catalysed reaction is adenosine(1518)/adenosine(1519) in 16S rRNA + 4 S-adenosyl-L-methionine = N(6)-dimethyladenosine(1518)/N(6)-dimethyladenosine(1519) in 16S rRNA + 4 S-adenosyl-L-homocysteine + 4 H(+). Specifically dimethylates two adjacent adenosines (A1518 and A1519) in the loop of a conserved hairpin near the 3'-end of 16S rRNA in the 30S particle. May play a critical role in biogenesis of 30S subunits. This chain is Ribosomal RNA small subunit methyltransferase A, found in Clostridium botulinum (strain Kyoto / Type A2).